The sequence spans 236 residues: Eukaryotic translation initiation factor 3 subunit J (236 aa).

The segment at 1 to 65 (MADDWESAAD…APAKPKPNKA (65 aa)) is disordered. Residues 28-46 (GEDEDEDIKDSWEDEEEKK) are compositionally biased toward acidic residues. Over residues 47–58 (DEEKPTKTEAPA) the composition is skewed to basic and acidic residues.

The protein belongs to the eIF-3 subunit J family. In terms of assembly, component of the eukaryotic translation initiation factor 3 (eIF-3) complex. The eIF-3 complex interacts with pix.

Its subcellular location is the cytoplasm. Functionally, component of the eukaryotic translation initiation factor 3 (eIF-3) complex, which is involved in protein synthesis of a specialized repertoire of mRNAs and, together with other initiation factors, stimulates binding of mRNA and methionyl-tRNAi to the 40S ribosome. The eIF-3 complex specifically targets and initiates translation of a subset of mRNAs involved in cell proliferation. This is Eukaryotic translation initiation factor 3 subunit J from Drosophila melanogaster (Fruit fly).